The chain runs to 369 residues: UDP-3-O-(3-hydroxymyristoyl)glucosamine N-acyltransferase (369 aa).

Histidine 240 acts as the Proton acceptor in catalysis.

The protein belongs to the transferase hexapeptide repeat family. LpxD subfamily. As to quaternary structure, homotrimer.

It catalyses the reaction a UDP-3-O-[(3R)-3-hydroxyacyl]-alpha-D-glucosamine + a (3R)-hydroxyacyl-[ACP] = a UDP-2-N,3-O-bis[(3R)-3-hydroxyacyl]-alpha-D-glucosamine + holo-[ACP] + H(+). The catalysed reaction is UDP-3-O-[(3R)-3-hydroxytetradecanoyl]-alpha-D-glucosamine + (3R)-hydroxytetradecanoyl-[ACP] = UDP-2-N,3-O-bis[(3R)-3-hydroxytetradecanoyl]-alpha-D-glucosamine + holo-[ACP] + H(+). It participates in glycolipid biosynthesis; lipid IV(A) biosynthesis; lipid IV(A) from (3R)-3-hydroxytetradecanoyl-[acyl-carrier-protein] and UDP-N-acetyl-alpha-D-glucosamine: step 3/6. Functionally, catalyzes the N-acylation of UDP-3-O-(hydroxytetradecanoyl)glucosamine using 3-hydroxytetradecanoyl-ACP as the acyl donor. Is involved in the biosynthesis of lipid A, a phosphorylated glycolipid that anchors the lipopolysaccharide to the outer membrane of the cell. The chain is UDP-3-O-(3-hydroxymyristoyl)glucosamine N-acyltransferase from Blochmanniella floridana.